The sequence spans 382 residues: Glycerate kinase (382 aa).

This sequence belongs to the glycerate kinase type-1 family.

The catalysed reaction is (R)-glycerate + ATP = (2R)-3-phosphoglycerate + ADP + H(+). The chain is Glycerate kinase (glxK) from Bacillus subtilis (strain 168).